We begin with the raw amino-acid sequence, 331 residues long: Methionyl-tRNA formyltransferase (331 aa).

110-113 (SLLP) provides a ligand contact to (6S)-5,6,7,8-tetrahydrofolate. The tract at residues 312 to 331 (HAPAERVSAAGSPAGAGGAP) is disordered.

The protein belongs to the Fmt family.

It catalyses the reaction L-methionyl-tRNA(fMet) + (6R)-10-formyltetrahydrofolate = N-formyl-L-methionyl-tRNA(fMet) + (6S)-5,6,7,8-tetrahydrofolate + H(+). Attaches a formyl group to the free amino group of methionyl-tRNA(fMet). The formyl group appears to play a dual role in the initiator identity of N-formylmethionyl-tRNA by promoting its recognition by IF2 and preventing the misappropriation of this tRNA by the elongation apparatus. In Frankia alni (strain DSM 45986 / CECT 9034 / ACN14a), this protein is Methionyl-tRNA formyltransferase.